A 434-amino-acid chain; its full sequence is MQSVLYPWHRQVLRCSWSRLCLLKRYLFTMKLQSPEFQSLFTEGLKSLTELFAKENHELRIAGGAVRDLLNGVKPQDVDFATTATPTQMKEMFQSAGIRMINNKGEKHGTITARLHEENFEVTTLRIDVTTDGRHAEVEFTTDWQKDAERRDLTINSMFLGFDGTLFDYFNGYADLKNKKVRFVGHAKQRIQEDYLRILRYFRFYGRIVDRPGDHDHETLEAIAENAKGLAGISGERIWVELKKILTGDHVNHLIHLIYDLGVAPHIGLPANANLEEFNKVSKNVEGFSPKPMTLLASLFKVQDDVTKLDLRLKISKEEKNLGLFIVKNRKDLIKATDSSEPLKPYQDFVIDSREPDATARVCELLKYQGEHGLLKEMQQWSVPPFPVSGHDIRKVGISSGKEIGALLQQLREQWKKSGYRMEKDELLSYIKKT.

Residues 1 to 41 (MQSVLYPWHRQVLRCSWSRLCLLKRYLFTMKLQSPEFQSLF) constitute a mitochondrion transit peptide. ATP-binding residues include Gly64 and Arg67. CTP is bound by residues Gly64 and Arg67. The Mg(2+) site is built by Asp77 and Asp79. ATP contacts are provided by Arg151, Asp194, Arg197, Arg200, and Arg203. CTP-binding residues include Arg151, Asp194, Arg197, Arg200, and Arg203. Ser400 bears the Phosphoserine mark. Lys402 carries the post-translational modification N6-acetyllysine.

This sequence belongs to the tRNA nucleotidyltransferase/poly(A) polymerase family. Monomer, and homodimer. Mg(2+) is required as a cofactor.

It localises to the mitochondrion. The protein resides in the cytoplasm. It is found in the nucleus. It catalyses the reaction a tRNA precursor + 2 CTP + ATP = a tRNA with a 3' CCA end + 3 diphosphate. The catalysed reaction is a tRNA with a 3' CCA end + 2 CTP + ATP = a tRNA with a 3' CCACCA end + 3 diphosphate. Nucleotidyltransferase that catalyzes the addition and repair of the essential 3'-terminal CCA sequence in tRNAs, which is necessary for the attachment of amino acids to the 3' terminus of tRNA molecules, using CTP and ATP as substrates. tRNA 3'-terminal CCA addition is required both for tRNA processing and repair. Promotes tRNA repair and recycling downstream of the ribosome-associated quality control (RQC) pathway by mediating addition of the tRNA 3'-terminal CCA following cleavage by ANKZF1 and repair by ELAC1. Also involved in tRNA surveillance by mediating tandem CCA addition to generate a CCACCA at the 3' terminus of unstable tRNAs and tRNA-like transcripts. While stable tRNAs receive only 3'-terminal CCA, unstable tRNAs beginning with GG are marked with CCACCA and rapidly degraded. The structural flexibility of RNA controls the choice between CCA versus CCACCA addition: following the first CCA addition cycle, nucleotide-binding to the active site triggers a clockwise screw motion, producing torque on the RNA. This ejects stable RNAs, whereas unstable RNAs are refolded while bound to the enzyme and subjected to a second CCA catalytic cycle. The chain is CCA tRNA nucleotidyltransferase 1, mitochondrial (Trnt1) from Mus musculus (Mouse).